We begin with the raw amino-acid sequence, 196 residues long: Heat shock protein beta-8 (196 aa).

Residues 1–35 (MADGQMPFSCHYPSRLRRDPFRDSPLPSRLLDDDF) are disordered. Residues serine 24 and serine 57 each carry the phosphoserine modification. The residue at position 63 (threonine 63) is a Phosphothreonine. Asymmetric dimethylarginine occurs at positions 71 and 78. In terms of domain architecture, sHSP spans 74-185 (TAAARFGVPA…PFGESNFNNE (112 aa)). Position 87 is a phosphoserine (serine 87). Positions 176-196 (PFGESNFNNELPQDSQEVTCT) are disordered. The segment covering 178–196 (GESNFNNELPQDSQEVTCT) has biased composition (polar residues).

It belongs to the small heat shock protein (HSP20) family. Monomer. Forms a ternary complex with BAG3 and HSPA1A. Component of the chaperone-assisted selective autophagy (CASA) complex consisting of BAG3, HSPA8/HSC70, HSPB8 and STUB1/CHIP. Interacts with HSPB1. Interacts with DNAJB6. Interacts with BAG3. Phosphorylated.

The protein resides in the cytoplasm. The protein localises to the nucleus. Functionally, involved in the chaperone-assisted selective autophagy (CASA), a crucial process for protein quality control, particularly in mechanical strained cells and tissues such as muscle. Displays temperature-dependent chaperone activity. In Canis lupus familiaris (Dog), this protein is Heat shock protein beta-8 (HSPB8).